A 422-amino-acid polypeptide reads, in one-letter code: SPbeta prophage-derived glycosyltransferase SunS (422 aa).

The protein belongs to the glycosyltransferase 2 family.

In terms of biological role, transfers a hexose moiety onto 'Cys-41' of bacteriocin sublancin-168 (SunA). Accepts UDP-glucose (UDP-Glc), UDP-N-acetylglucosamine (UDP-GlcNAc), UDP-galactose (UDP-Gal), UDP-xylose (UDP-Xyl) and GDP-mannose as substrate. This Bacillus subtilis (strain 168) protein is SPbeta prophage-derived glycosyltransferase SunS (sunS).